Here is a 378-residue protein sequence, read N- to C-terminus: Decaprenyl-diphosphate synthase subunit 1 (378 aa).

Isopentenyl diphosphate is bound by residues Lys72, Arg75, and His130. Mg(2+) contacts are provided by Asp137 and Asp141. Arg147 lines the isopentenyl diphosphate pocket.

Belongs to the FPP/GGPP synthase family. In terms of assembly, heterotetramer of 2 dps1 and 2 dlp1 subunits. It depends on Mg(2+) as a cofactor.

The protein localises to the mitochondrion. It carries out the reaction 7 isopentenyl diphosphate + (2E,6E)-farnesyl diphosphate = all-trans-decaprenyl diphosphate + 7 diphosphate. It functions in the pathway cofactor biosynthesis; ubiquinone biosynthesis. Supplies decaprenyl diphosphate, the precursor for the side chain of the isoprenoid quinones ubiquinone-10. This Schizosaccharomyces pombe (strain 972 / ATCC 24843) (Fission yeast) protein is Decaprenyl-diphosphate synthase subunit 1 (dps1).